The following is a 287-amino-acid chain: Pantothenate synthetase (287 aa).

30 to 37 (MGNLHSGH) is an ATP binding site. Residue H37 is the Proton donor of the active site. Q61 contributes to the (R)-pantoate binding site. Position 61 (Q61) interacts with beta-alanine. 149–152 (GEKD) serves as a coordination point for ATP. Q155 contributes to the (R)-pantoate binding site. Residues V178 and 186–189 (LSSR) each bind ATP.

Belongs to the pantothenate synthetase family. As to quaternary structure, homodimer.

Its subcellular location is the cytoplasm. It carries out the reaction (R)-pantoate + beta-alanine + ATP = (R)-pantothenate + AMP + diphosphate + H(+). It participates in cofactor biosynthesis; (R)-pantothenate biosynthesis; (R)-pantothenate from (R)-pantoate and beta-alanine: step 1/1. Catalyzes the condensation of pantoate with beta-alanine in an ATP-dependent reaction via a pantoyl-adenylate intermediate. The chain is Pantothenate synthetase from Pseudomonas putida (strain ATCC 47054 / DSM 6125 / CFBP 8728 / NCIMB 11950 / KT2440).